A 170-amino-acid chain; its full sequence is MKEAYLYIVEKSVAWEFDSPEYGRLARKVVELLYERKEDLSDDRVAIFLNISTAETRRILQYLMKQNMVGVKKRTTEDYRIEYTWYVDDEIIRQAIKNRAKVAKEKISSLIRSLTEGAYYICPTCHMRYTLDEAINYGGVCPVCGTQLEYVENTEEINKLTKVYEEVDKI.

The HTH TFE/IIEalpha-type domain maps to M1 to R93.

It belongs to the TFE family. Monomer. Interaction with RNA polymerase subunits RpoF and RpoE is necessary for Tfe stimulatory transcription activity. Able to interact with Tbp and RNA polymerase in the absence of DNA promoter. Interacts both with the preinitiation and elongation complexes.

Transcription factor that plays a role in the activation of archaeal genes transcribed by RNA polymerase. Facilitates transcription initiation by enhancing TATA-box recognition by TATA-box-binding protein (Tbp), and transcription factor B (Tfb) and RNA polymerase recruitment. Not absolutely required for transcription in vitro, but particularly important in cases where Tbp or Tfb function is not optimal. It dynamically alters the nucleic acid-binding properties of RNA polymerases by stabilizing the initiation complex and destabilizing elongation complexes. Seems to translocate with the RNA polymerase following initiation and acts by binding to the non template strand of the transcription bubble in elongation complexes. In Pyrobaculum islandicum (strain DSM 4184 / JCM 9189 / GEO3), this protein is Transcription factor E.